A 158-amino-acid chain; its full sequence is MGIQHKLDVFIVSENIAIKDANLLNGDSYGCTIKLKLNTKKSVRFVVLLEPEWIDEIKPMYMKLNGVSVDLKLDYKDAIKRIYSVDLVLYSDSVIHLFSDTDERYTCEYPTIKVNMIKKYYHVQHRGTTCVHIESPINVSDKYWFMKRDGWYVDRTHS.

The protein belongs to the poxviridae C7 protein family.

Plays a role for multiplication of the virus in different cell types. The protein is Probable host range protein 2-1 of Rabbit fibroma virus (strain Kasza) (RFV).